The primary structure comprises 371 residues: Lysine racemase (371 aa).

Catalysis depends on Lys39, which acts as the Proton acceptor. The residue at position 39 (Lys39) is an N6-(pyridoxal phosphate)lysine. Arg135 contacts substrate. The active-site Proton acceptor is the Tyr266. A substrate-binding site is contributed by Met313.

The protein belongs to the alanine racemase family. In terms of assembly, homodimer. The cofactor is pyridoxal 5'-phosphate.

It carries out the reaction L-lysine = D-lysine. In terms of biological role, catalyzes the interconversion of D-lysine and L-lysine. Can also use arginine and ornithine, but not alanine. This chain is Lysine racemase, found in Oenococcus oeni (strain ATCC BAA-331 / PSU-1).